Consider the following 166-residue polypeptide: Signal peptidase complex catalytic subunit SEC11 (166 aa).

Residues 1 to 9 are Cytoplasmic-facing; sequence MNIRQQLTQ. Residues 10-30 traverse the membrane as a helical; Signal-anchor for type II membrane protein segment; it reads FLSLAYVFTSAFVIWKSLGII. Topologically, residues 31-166 are lumenal; the sequence is TNSHSPIVVV…MCISTLLTNE (136 aa). Active-site charge relay system residues include serine 44, histidine 83, and aspartate 108. The interval 152–163 is C-terminal short (CTS) helix; the sequence is GMLGLMCISTLL.

This sequence belongs to the peptidase S26B family. In terms of assembly, component of the signal peptidase complex (SPC) composed of a catalytic subunit SEC11 and three accessory subunits SPC1, SPC2 and SPC3. The complex induces a local thinning of the ER membrane which is used to measure the length of the signal peptide (SP) h-region of protein substrates. This ensures the selectivity of the complex towards h-regions shorter than 18-20 amino acids. SPC associates with the translocon complex.

Its subcellular location is the endoplasmic reticulum membrane. The enzyme catalyses Cleavage of hydrophobic, N-terminal signal or leader sequences from secreted and periplasmic proteins.. In terms of biological role, catalytic component of the signal peptidase complex (SPC) which catalyzes the cleavage of N-terminal signal sequences from nascent proteins as they are translocated into the lumen of the endoplasmic reticulum. Specifically cleaves N-terminal signal peptides that contain a hydrophobic alpha-helix (h-region) shorter than 18-20 amino acids. This chain is Signal peptidase complex catalytic subunit SEC11 (SEC11), found in Scheffersomyces stipitis (strain ATCC 58785 / CBS 6054 / NBRC 10063 / NRRL Y-11545) (Yeast).